A 582-amino-acid chain; its full sequence is Fructose-1,6-bisphosphatase class 3 (582 aa).

Belongs to the FBPase class 3 family. Mn(2+) is required as a cofactor.

The catalysed reaction is beta-D-fructose 1,6-bisphosphate + H2O = beta-D-fructose 6-phosphate + phosphate. Its pathway is carbohydrate biosynthesis; gluconeogenesis. The polypeptide is Fructose-1,6-bisphosphatase class 3 (Saccharophagus degradans (strain 2-40 / ATCC 43961 / DSM 17024)).